The primary structure comprises 418 residues: ATP-dependent RNA helicase RhlB (418 aa).

Residues 9–37 (TKFADLPLEKSLISGLTSQGYEYCTPIQA) carry the Q motif motif. Residues 40 to 219 (LPITLTGKDI…FEHMNDPESI (180 aa)) form the Helicase ATP-binding domain. 53–60 (AQTGTGKT) contacts ATP. The short motif at 165–168 (DEAD) is the DEAD box element. In terms of domain architecture, Helicase C-terminal spans 243–390 (KILLLLSLIE…CSEYDKNAML (148 aa)).

This sequence belongs to the DEAD box helicase family. RhlB subfamily. In terms of assembly, component of the RNA degradosome, which is a multiprotein complex involved in RNA processing and mRNA degradation.

It is found in the cytoplasm. The enzyme catalyses ATP + H2O = ADP + phosphate + H(+). Functionally, DEAD-box RNA helicase involved in RNA degradation. Has RNA-dependent ATPase activity and unwinds double-stranded RNA. In Psychromonas ingrahamii (strain DSM 17664 / CCUG 51855 / 37), this protein is ATP-dependent RNA helicase RhlB.